A 559-amino-acid chain; its full sequence is Glycerol kinase (559 aa).

Residue Thr-20 coordinates ADP. 3 residues coordinate ATP: Thr-20, Ser-21, and Ser-22. A sn-glycerol 3-phosphate-binding site is contributed by Thr-20. Arg-24 serves as a coordination point for ADP. Residues Arg-94, Glu-95, and Tyr-148 each contribute to the sn-glycerol 3-phosphate site. Positions 94, 95, and 148 each coordinate glycerol. Gly-252 serves as a coordination point for beta-D-fructose 1,6-bisphosphate. Residue Asp-265 coordinates sn-glycerol 3-phosphate. Residues Asp-265 and Gln-266 each contribute to the glycerol site. Residues Thr-287, Gly-332, Gly-433, and Asn-437 each contribute to the ADP site. ATP is bound by residues Thr-287, Gly-332, and Gly-433. A Zn(2+)-binding site is contributed by Glu-501. A helical transmembrane segment spans residues 532-552 (IFCSLPLGFFIVSSMVMLIGA).

It belongs to the FGGY kinase family.

It localises to the mitochondrion outer membrane. The protein resides in the nucleus. It is found in the cytoplasm. The protein localises to the cytosol. It carries out the reaction glycerol + ATP = sn-glycerol 3-phosphate + ADP + H(+). It participates in polyol metabolism; glycerol degradation via glycerol kinase pathway; sn-glycerol 3-phosphate from glycerol: step 1/1. In terms of biological role, kinase that plays a key role in glycerol metabolism, catalyzing its phosphorylation to produce sn-glycerol 3-phosphate. Sn-glycerol 3-phosphate is a crucial intermediate in various metabolic pathways, such as the synthesis of glycerolipids and triglycerides, glycogenesis, glycolysis and gluconeogenesis. This Rattus norvegicus (Rat) protein is Glycerol kinase.